A 485-amino-acid chain; its full sequence is Putative non-structural protein 1 (485 aa).

This is Putative non-structural protein 1 (S7) from Micromonas pusilla (Picoplanktonic green alga).